The following is a 643-amino-acid chain: MPIITLPDGSQRQFEQPISVMDVAASIGAGLAKACIAGRVNGERKDACDLITEDSKLEIITAKEEDGLEIIRHSCAHLLGHAIKQLFPNVKMAIGPTIDKGFYYDVDLDRSLTQEDLDALEKRMLELAKTNYDVVKKVVSWQEARDTFEARGEPYKMAILDENIDRCDTPALYHHEEYVDMCRGPHVPNMRFCHHFKLMKVAGAYWRGDSKNKMLQRIYGTAWADKKQLSEYLTRLEEAAKRDHRKIGKALDLYHMQEEAPGMVFWHNDGWTIFRELETFVRTKLKEYDYQEVKGPFMMDRVLWEKTGHWQNYGDLMFTTQSENREYAIKPMNCPGHVQIFNQGLKSYRDLPIRMAEFGSCHRNEPSGSLHGLMRVRGFTQDDAHIFCTEDQIESEVTACIKMVYDIYSTFGFENIQVKLSTRPEKRIGADEMWDRAEAGLAAALSHNGLEYEIQEGEGAFYGPKIEFALRDCLDREWQCGTIQLDFALPGRLNASYVAEDNDRRTPVMIHRAILGSIERFIGIITEEYAGFFPAWLAPTQAIVMNITDSQSDYVQKVVKTLSDAGLRVKSDLRNEKIGFKIREHTLRRVPYMLVCGDKEIEAGKVAVRTRKGADLGTFTIEEFLDILKKQVRSRELKLLGEE.

The region spanning 1–61 is the TGS domain; the sequence is MPIITLPDGS…TEDSKLEIIT (61 aa). The interval 243-534 is catalytic; sequence DHRKIGKALD…ITEEYAGFFP (292 aa). 3 residues coordinate Zn(2+): Cys334, His385, and His511.

It belongs to the class-II aminoacyl-tRNA synthetase family. Homodimer. Zn(2+) is required as a cofactor.

It is found in the cytoplasm. The catalysed reaction is tRNA(Thr) + L-threonine + ATP = L-threonyl-tRNA(Thr) + AMP + diphosphate + H(+). Catalyzes the attachment of threonine to tRNA(Thr) in a two-step reaction: L-threonine is first activated by ATP to form Thr-AMP and then transferred to the acceptor end of tRNA(Thr). Also edits incorrectly charged L-seryl-tRNA(Thr). The chain is Threonine--tRNA ligase from Pasteurella multocida (strain Pm70).